We begin with the raw amino-acid sequence, 512 residues long: Calcium-dependent protein kinase 18 (512 aa).

A disordered region spans residues 1-25; that stretch reads MGLCSSSSARRDAGTPGGGNGAGNK. Gly-2 carries N-myristoyl glycine lipidation. One can recognise a Protein kinase domain in the interval 52 to 312; it reads YALGKLLGHG…AAQALSHEWV (261 aa). ATP contacts are provided by residues 58–66 and Lys-81; that span reads LGHGQFGYT. Residue Asp-178 is the Proton acceptor of the active site. The interval 318–348 is autoinhibitory domain; sequence ASDIPLDISVLHNMRQFVKYSRFKQFALRAL. EF-hand domains follow at residues 355 to 390, 392 to 427, 434 to 469, and 472 to 499; these read EELS…DVPW, LKGP…VHQL, KWKS…KGSI, and LLEE…ASMS. The Ca(2+) site is built by Asp-368, Asp-370, Asn-372, Thr-374, Glu-379, Asp-405, Asn-407, Asp-409, Glu-416, Asp-447, Asp-449, Asp-451, Tyr-453, Glu-458, Asp-477, Asp-479, Asp-481, Lys-483, and Glu-488.

It belongs to the protein kinase superfamily. Ser/Thr protein kinase family. CDPK subfamily. In terms of assembly, interacts with MPK5. Autophosphorylated. Phosphorylated by MPK5.

The protein localises to the cell membrane. It carries out the reaction L-seryl-[protein] + ATP = O-phospho-L-seryl-[protein] + ADP + H(+). The catalysed reaction is L-threonyl-[protein] + ATP = O-phospho-L-threonyl-[protein] + ADP + H(+). Its activity is regulated as follows. Activated by calcium. Autophosphorylation may play an important role in the regulation of the kinase activity. In terms of biological role, may play a role in signal transduction pathways that involve calcium as a second messenger. Functions upstream of MPK5 in a signaling pathway that represses defense gene expression and negatively regulates resistance to rice blast fungus. Phosphorylates MPK5 at Thr-14 and Thr-32 and activates MPK5 independently of MAP kinase kinase (MKK) phosphorylation. May be involved in arbuscular mycorrhizal presymbiotic phase signaling. Phosphorylates the elicitor-responsive protein ERG1 in vitro. Phosphorylation is calcium-dependent. In Oryza sativa subsp. japonica (Rice), this protein is Calcium-dependent protein kinase 18.